Consider the following 399-residue polypeptide: Elongation factor Tu (399 aa).

One can recognise a tr-type G domain in the interval 10–207; it reads KTHMNVGTIG…AVDSYFPDPV (198 aa). The G1 stretch occupies residues 19-26; the sequence is GHIDHGKT. A GTP-binding site is contributed by 19–26; it reads GHIDHGKT. Thr-26 contributes to the Mg(2+) binding site. The segment at 60–64 is G2; it reads GITIN. The G3 stretch occupies residues 81–84; the sequence is DCPG. GTP-binding positions include 81–85 and 136–139; these read DCPGH and NKVD. A G4 region spans residues 136 to 139; the sequence is NKVD. Residues 174 to 176 are G5; it reads SAL.

The protein belongs to the TRAFAC class translation factor GTPase superfamily. Classic translation factor GTPase family. EF-Tu/EF-1A subfamily. In terms of assembly, monomer.

The protein localises to the cytoplasm. It catalyses the reaction GTP + H2O = GDP + phosphate + H(+). In terms of biological role, GTP hydrolase that promotes the GTP-dependent binding of aminoacyl-tRNA to the A-site of ribosomes during protein biosynthesis. The protein is Elongation factor Tu of Petrotoga mobilis (strain DSM 10674 / SJ95).